A 441-amino-acid polypeptide reads, in one-letter code: Eukaryotic translation initiation factor 3 subunit M (441 aa).

The region spanning 196 to 365 is the PCI domain; sequence ESEQAYTYLL…QTFLIHRSTY (170 aa). A compositionally biased stretch (basic and acidic residues) spans 405–418; that stretch reads KEEEANKADNKYDS. A disordered region spans residues 405-441; that stretch reads KEEEANKADNKYDSARGFQRGGQRKQPRALDDDMGLE.

It belongs to the eIF-3 subunit M family. As to quaternary structure, component of the eukaryotic translation initiation factor 3 (eIF-3) complex.

The protein localises to the cytoplasm. Component of the eukaryotic translation initiation factor 3 (eIF-3) complex, which is involved in protein synthesis of a specialized repertoire of mRNAs and, together with other initiation factors, stimulates binding of mRNA and methionyl-tRNAi to the 40S ribosome. The eIF-3 complex specifically targets and initiates translation of a subset of mRNAs involved in cell proliferation. This Phaeosphaeria nodorum (strain SN15 / ATCC MYA-4574 / FGSC 10173) (Glume blotch fungus) protein is Eukaryotic translation initiation factor 3 subunit M.